We begin with the raw amino-acid sequence, 141 residues long: NADPH-dependent 7-cyano-7-deazaguanine reductase (141 aa).

The active-site Thioimide intermediate is the Cys-34. The Proton donor role is filled by Asp-41. Substrate contacts are provided by residues 56–58 (VEL) and 75–76 (HE).

This sequence belongs to the GTP cyclohydrolase I family. QueF type 1 subfamily.

It is found in the cytoplasm. It catalyses the reaction 7-aminomethyl-7-carbaguanine + 2 NADP(+) = 7-cyano-7-deazaguanine + 2 NADPH + 3 H(+). The protein operates within tRNA modification; tRNA-queuosine biosynthesis. Functionally, catalyzes the NADPH-dependent reduction of 7-cyano-7-deazaguanine (preQ0) to 7-aminomethyl-7-deazaguanine (preQ1). In Acidithiobacillus ferrooxidans (strain ATCC 23270 / DSM 14882 / CIP 104768 / NCIMB 8455) (Ferrobacillus ferrooxidans (strain ATCC 23270)), this protein is NADPH-dependent 7-cyano-7-deazaguanine reductase.